A 152-amino-acid polypeptide reads, in one-letter code: Large ribosomal subunit protein bL9 (152 aa).

The protein belongs to the bacterial ribosomal protein bL9 family.

Its function is as follows. Binds to the 23S rRNA. The protein is Large ribosomal subunit protein bL9 of Synechococcus elongatus (strain ATCC 33912 / PCC 7942 / FACHB-805) (Anacystis nidulans R2).